We begin with the raw amino-acid sequence, 234 residues long: N-acetyl-alpha-D-glucosaminyl L-malate deacetylase 1 (234 aa).

Zn(2+)-binding residues include His12, Asp15, and His113.

The protein belongs to the PIGL family. As to quaternary structure, homohexamer. Trimer of dimers. Zn(2+) serves as cofactor.

The enzyme catalyses (S)-malyl N-acetyl-alpha-D-glucosaminide + H2O = (S)-malyl alpha-D-glucosaminide + acetate. Involved in bacillithiol (BSH) biosynthesis. Catalyzes the second step of the pathway, the deacetylation of N-acetylglucosaminylmalate (GlcNAc-Mal) to glucosamine malate (GlcN-Mal). The protein is N-acetyl-alpha-D-glucosaminyl L-malate deacetylase 1 of Bacillus cereus (strain ATCC 14579 / DSM 31 / CCUG 7414 / JCM 2152 / NBRC 15305 / NCIMB 9373 / NCTC 2599 / NRRL B-3711).